Reading from the N-terminus, the 636-residue chain is Threonine--tRNA ligase (636 aa).

Residues 1–63 (MPMITITLPD…EHDASLRIIT (63 aa)) form the TGS domain. A catalytic region spans residues 245–536 (DHRKIGKAQD…LIEHHAGAFP (292 aa)). Cys336, His387, and His513 together coordinate Zn(2+).

The protein belongs to the class-II aminoacyl-tRNA synthetase family. As to quaternary structure, homodimer. Requires Zn(2+) as cofactor.

The protein resides in the cytoplasm. It catalyses the reaction tRNA(Thr) + L-threonine + ATP = L-threonyl-tRNA(Thr) + AMP + diphosphate + H(+). Functionally, catalyzes the attachment of threonine to tRNA(Thr) in a two-step reaction: L-threonine is first activated by ATP to form Thr-AMP and then transferred to the acceptor end of tRNA(Thr). Also edits incorrectly charged L-seryl-tRNA(Thr). The chain is Threonine--tRNA ligase from Xanthomonas campestris pv. campestris (strain 8004).